Reading from the N-terminus, the 156-residue chain is Large ribosomal subunit protein bL17 (156 aa).

The tract at residues 127–156 (RATRAAASKKAAEEKAAEAAEEKDEAAEEK) is disordered. A compositionally biased stretch (basic and acidic residues) spans 136–146 (KAAEEKAAEAA). Residues 147–156 (EEKDEAAEEK) are compositionally biased toward acidic residues.

The protein belongs to the bacterial ribosomal protein bL17 family. In terms of assembly, part of the 50S ribosomal subunit. Contacts protein L32.

The chain is Large ribosomal subunit protein bL17 from Corynebacterium urealyticum (strain ATCC 43042 / DSM 7109).